Reading from the N-terminus, the 363-residue chain is Mannose-1-phosphate guanyltransferase (363 aa).

The protein belongs to the transferase hexapeptide repeat family.

The protein resides in the cytoplasm. The catalysed reaction is alpha-D-mannose 1-phosphate + GTP + H(+) = GDP-alpha-D-mannose + diphosphate. The protein operates within nucleotide-sugar biosynthesis; GDP-alpha-D-mannose biosynthesis; GDP-alpha-D-mannose from alpha-D-mannose 1-phosphate (GTP route): step 1/1. Functionally, involved in cell wall synthesis where it is required for glycosylation. Involved in cell cycle progression through cell-size checkpoint. In Yarrowia lipolytica (strain CLIB 122 / E 150) (Yeast), this protein is Mannose-1-phosphate guanyltransferase (MPG1).